Reading from the N-terminus, the 337-residue chain is Ketol-acid reductoisomerase (NADP(+)) (337 aa).

The 181-residue stretch at 1 to 181 (MKIYYEHDAD…GAARAGVIAT (181 aa)) folds into the KARI N-terminal Rossmann domain. Residues 24–27 (FGSQ), R47, S50, S52, and 82–85 (DEKQ) contribute to the NADP(+) site. Residue H107 is part of the active site. G133 contributes to the NADP(+) binding site. Residues 182 to 328 (TFKDETETDL…SRLRAMMPFL (147 aa)) form the KARI C-terminal knotted domain. Residues D190, E194, E226, and E230 each contribute to the Mg(2+) site. Position 251 (S251) interacts with substrate.

Belongs to the ketol-acid reductoisomerase family. The cofactor is Mg(2+).

It catalyses the reaction (2R)-2,3-dihydroxy-3-methylbutanoate + NADP(+) = (2S)-2-acetolactate + NADPH + H(+). It carries out the reaction (2R,3R)-2,3-dihydroxy-3-methylpentanoate + NADP(+) = (S)-2-ethyl-2-hydroxy-3-oxobutanoate + NADPH + H(+). Its pathway is amino-acid biosynthesis; L-isoleucine biosynthesis; L-isoleucine from 2-oxobutanoate: step 2/4. It functions in the pathway amino-acid biosynthesis; L-valine biosynthesis; L-valine from pyruvate: step 2/4. In terms of biological role, involved in the biosynthesis of branched-chain amino acids (BCAA). Catalyzes an alkyl-migration followed by a ketol-acid reduction of (S)-2-acetolactate (S2AL) to yield (R)-2,3-dihydroxy-isovalerate. In the isomerase reaction, S2AL is rearranged via a Mg-dependent methyl migration to produce 3-hydroxy-3-methyl-2-ketobutyrate (HMKB). In the reductase reaction, this 2-ketoacid undergoes a metal-dependent reduction by NADPH to yield (R)-2,3-dihydroxy-isovalerate. The protein is Ketol-acid reductoisomerase (NADP(+)) of Thermus thermophilus (strain ATCC BAA-163 / DSM 7039 / HB27).